The sequence spans 278 residues: Large ribosomal subunit protein uL2 (278 aa).

A compositionally biased stretch (basic residues) spans 212–221 (NRWLGKRPHN). The segment at 212-278 (NRWLGKRPHN…ILSSRHNRKK (67 aa)) is disordered.

Belongs to the universal ribosomal protein uL2 family. Part of the 50S ribosomal subunit. Forms a bridge to the 30S subunit in the 70S ribosome.

In terms of biological role, one of the primary rRNA binding proteins. Required for association of the 30S and 50S subunits to form the 70S ribosome, for tRNA binding and peptide bond formation. It has been suggested to have peptidyltransferase activity; this is somewhat controversial. Makes several contacts with the 16S rRNA in the 70S ribosome. This chain is Large ribosomal subunit protein uL2, found in Methylorubrum populi (strain ATCC BAA-705 / NCIMB 13946 / BJ001) (Methylobacterium populi).